Reading from the N-terminus, the 484-residue chain is Catalase (484 aa).

Position 53 is a methionine sulfone (Met-53). Active-site residues include His-54 and Asn-127. Tyr-337 is a heme binding site.

As to quaternary structure, homotetramer. Heme serves as cofactor. It depends on NADP(+) as a cofactor.

The protein resides in the cytoplasm. It carries out the reaction 2 H2O2 = O2 + 2 H2O. In terms of biological role, decomposes hydrogen peroxide into water and oxygen; serves to protect cells from the toxic effects of hydrogen peroxide. The polypeptide is Catalase (katA) (Proteus mirabilis).